We begin with the raw amino-acid sequence, 505 residues long: NADH-quinone oxidoreductase subunit N 1 (505 aa).

14 helical membrane passes run leucine 18–leucine 38, leucine 45–phenylalanine 65, tyrosine 84–alanine 104, isoleucine 116–asparagine 136, phenylalanine 138–tyrosine 158, leucine 173–valine 193, phenylalanine 223–phenylalanine 243, alanine 271–valine 291, glutamine 292–threonine 312, leucine 319–histidine 339, valine 345–valine 365, phenylalanine 391–glycine 411, glycine 429–isoleucine 449, and valine 473–valine 493.

The protein belongs to the complex I subunit 2 family. As to quaternary structure, NDH-1 is composed of 14 different subunits. Subunits NuoA, H, J, K, L, M, N constitute the membrane sector of the complex.

It is found in the cell inner membrane. It catalyses the reaction a quinone + NADH + 5 H(+)(in) = a quinol + NAD(+) + 4 H(+)(out). NDH-1 shuttles electrons from NADH, via FMN and iron-sulfur (Fe-S) centers, to quinones in the respiratory chain. The immediate electron acceptor for the enzyme in this species is believed to be ubiquinone. Couples the redox reaction to proton translocation (for every two electrons transferred, four hydrogen ions are translocated across the cytoplasmic membrane), and thus conserves the redox energy in a proton gradient. The sequence is that of NADH-quinone oxidoreductase subunit N 1 from Opitutus terrae (strain DSM 11246 / JCM 15787 / PB90-1).